The primary structure comprises 85 residues: Sec-independent protein translocase protein TatA (85 aa).

A helical membrane pass occupies residues 7–27 (VFGSLGWTEILLILFIALLLF). The tract at residues 50–85 (LTGESDDSSQQISQEQERSVPKEETKTSKSKKSKSA) is disordered. Positions 64–76 (EQERSVPKEETKT) are enriched in basic and acidic residues.

The protein belongs to the TatA/E family. In terms of assembly, forms a complex with TatC.

Its subcellular location is the cell inner membrane. In terms of biological role, part of the twin-arginine translocation (Tat) system that transports large folded proteins containing a characteristic twin-arginine motif in their signal peptide across membranes. TatA could form the protein-conducting channel of the Tat system. The polypeptide is Sec-independent protein translocase protein TatA (Leptospira interrogans serogroup Icterohaemorrhagiae serovar Lai (strain 56601)).